Reading from the N-terminus, the 250-residue chain is tRNA (guanine-N(1)-)-methyltransferase (250 aa).

S-adenosyl-L-methionine is bound by residues glycine 116 and 136–141 (IGDYVL).

This sequence belongs to the RNA methyltransferase TrmD family. In terms of assembly, homodimer.

Its subcellular location is the cytoplasm. The enzyme catalyses guanosine(37) in tRNA + S-adenosyl-L-methionine = N(1)-methylguanosine(37) in tRNA + S-adenosyl-L-homocysteine + H(+). Specifically methylates guanosine-37 in various tRNAs. The sequence is that of tRNA (guanine-N(1)-)-methyltransferase from Pseudomonas fluorescens (strain SBW25).